The sequence spans 346 residues: Selenide, water dikinase (346 aa).

Residue U16 is part of the active site. A non-standard amino acid (selenocysteine) is located at residue U16. ATP-binding positions include K19 and 47-49; that span reads TAD. D50 serves as a coordination point for Mg(2+). ATP is bound by residues D67, D90, and 138–140; that span reads GHS. D90 provides a ligand contact to Mg(2+). D226 provides a ligand contact to Mg(2+).

The protein belongs to the selenophosphate synthase 1 family. Class I subfamily. Homodimer. Requires Mg(2+) as cofactor.

The enzyme catalyses hydrogenselenide + ATP + H2O = selenophosphate + AMP + phosphate + 2 H(+). In terms of biological role, synthesizes selenophosphate from selenide and ATP. The sequence is that of Selenide, water dikinase from Haemophilus influenzae (strain ATCC 51907 / DSM 11121 / KW20 / Rd).